An 86-amino-acid polypeptide reads, in one-letter code: MAHKKAGGSTRNGRDSESKRLGVKRYGGQVVSAGEIIVRQRGTKFHAGVNAGMGKDHTIFAKETGRVKFEVKGPLNRKYVVIEPVA.

Residues 1–24 form a disordered region; it reads MAHKKAGGSTRNGRDSESKRLGVK.

The protein belongs to the bacterial ribosomal protein bL27 family.

The polypeptide is Large ribosomal subunit protein bL27 (Alcanivorax borkumensis (strain ATCC 700651 / DSM 11573 / NCIMB 13689 / SK2)).